The sequence spans 137 residues: Photosystem II reaction center W protein, chloroplastic (137 aa).

Residues 1 to 64 (MATITASSSA…ETTTTTNKSM (64 aa)) constitute a chloroplast transit peptide. A thylakoid-targeting transit peptide spans 65-83 (GASLLAAAAAATISNPAMA). Residues 84–103 (LVDERMSTEGTGLPFGLSNN) are Lumenal, thylakoid-facing. Residues 104 to 123 (LLGWILFGVFGLIWALYFVY) form a helical membrane-spanning segment. The Stromal portion of the chain corresponds to 124 to 137 (ASGLEEDEESGLSL).

Part of the photosystem II complex. PSII is composed of 1 copy each of membrane proteins PsbA, PsbB, PsbC, PsbD, numerous small proteins, at least 3 peripheral proteins of the oxygen-evolving complex and a large number of cofactors. It forms dimeric complexes.

The protein localises to the plastid. The protein resides in the chloroplast thylakoid membrane. Functionally, stabilizes dimeric photosystem II (PSII). In its absence no dimeric PSII accumulates and there is a reduction of monomeric PSII. This Spinacia oleracea (Spinach) protein is Photosystem II reaction center W protein, chloroplastic.